Here is a 120-residue protein sequence, read N- to C-terminus: Large ribosomal subunit protein uL18 (120 aa).

Belongs to the universal ribosomal protein uL18 family. As to quaternary structure, part of the 50S ribosomal subunit; part of the 5S rRNA/L5/L18/L25 subcomplex. Contacts the 5S and 23S rRNAs.

This is one of the proteins that bind and probably mediate the attachment of the 5S RNA into the large ribosomal subunit, where it forms part of the central protuberance. This Bacillus cereus (strain AH820) protein is Large ribosomal subunit protein uL18.